A 530-amino-acid polypeptide reads, in one-letter code: uncharacterized protein (530 aa).

It belongs to the protein kinase superfamily. ADCK protein kinase family.

This is an uncharacterized protein from Clostridium pasteurianum.